Reading from the N-terminus, the 276-residue chain is Phosphonates import ATP-binding protein PhnC (276 aa).

Positions 5-253 (IRVERLNKTF…LLNDLYGADL (249 aa)) constitute an ABC transporter domain. An ATP-binding site is contributed by 37–44 (GASGSGKS).

It belongs to the ABC transporter superfamily. Phosphonates importer (TC 3.A.1.9.1) family. As to quaternary structure, the complex is composed of two ATP-binding proteins (PhnC), two transmembrane proteins (PhnE) and a solute-binding protein (PhnD).

The protein resides in the cell inner membrane. The catalysed reaction is phosphonate(out) + ATP + H2O = phosphonate(in) + ADP + phosphate + H(+). Part of the ABC transporter complex PhnCDE involved in phosphonates import. Responsible for energy coupling to the transport system. This Stutzerimonas stutzeri (Pseudomonas stutzeri) protein is Phosphonates import ATP-binding protein PhnC.